Reading from the N-terminus, the 787-residue chain is LPS-assembly protein LptD (787 aa).

Residues methionine 1 to alanine 24 form the signal peptide.

This sequence belongs to the LptD family. Component of the lipopolysaccharide transport and assembly complex. Interacts with LptE and LptA.

It localises to the cell outer membrane. Together with LptE, is involved in the assembly of lipopolysaccharide (LPS) at the surface of the outer membrane. The protein is LPS-assembly protein LptD of Pectobacterium atrosepticum (strain SCRI 1043 / ATCC BAA-672) (Erwinia carotovora subsp. atroseptica).